Here is an 836-residue protein sequence, read N- to C-terminus: Periostin (836 aa).

An N-terminal signal peptide occupies residues 1–21 (MIPFLPMFSLLLLLIVNPINA). In terms of domain architecture, EMI spans 40–94 (GPNVCALQQILGTKKKYFSTCKNWYKKSICGQKTTVLYECCPGYMRMEGMKGCPA). Cystine bridges form between Cys44-Cys80, Cys69-Cys333, Cys79-Cys92, Cys208-Cys311, and Cys467-Cys472. Cys60 bears the S-cysteinyl cysteine mark. FAS1 domains follow at residues 97–230 (PIDH…DRVL), 234–365 (GTSI…DQVL), 368–492 (DSAK…REII), and 496–628 (EKSL…DKLL). N-linked (GlcNAc...) asparagine glycosylation is present at Asn599.

In terms of assembly, homodimer. Interacts with BMP1 and fibronectin. Gamma-carboxylation is controversial. Gamma-carboxyglutamated; gamma-carboxyglutamate residues are formed by vitamin K dependent carboxylation; this may be required for calcium binding. According to a more recent report, does not contain vitamin K-dependent gamma-carboxyglutamate residues. Widely expressed with highest levels in aorta, stomach, lower gastrointestinal tract, placenta, uterus, thyroid tissue and breast. Expressed in the kidney. Expressed in the lung. Up-regulated in epithelial ovarian tumors. Not expressed in normal ovaries. Also highly expressed at the tumor periphery of lung carcinoma tissue but not within the tumor. Overexpressed in breast cancers.

The protein resides in the golgi apparatus. The protein localises to the secreted. It localises to the extracellular space. It is found in the extracellular matrix. Functionally, induces cell attachment and spreading and plays a role in cell adhesion. Enhances incorporation of BMP1 in the fibronectin matrix of connective tissues, and subsequent proteolytic activation of lysyl oxidase LOX. This chain is Periostin (POSTN), found in Homo sapiens (Human).